The following is a 239-amino-acid chain: Uridylate kinase (239 aa).

10 to 13 (KFSG) is an ATP binding site. The interval 18–23 (GENGFG) is involved in allosteric activation by GTP. Residue G52 participates in UMP binding. 2 residues coordinate ATP: G53 and R57. UMP is bound by residues D73 and 134–141 (TGNPYFTT). Residues T161, Y167, and D170 each contribute to the ATP site.

This sequence belongs to the UMP kinase family. Homohexamer.

It localises to the cytoplasm. The enzyme catalyses UMP + ATP = UDP + ADP. Its pathway is pyrimidine metabolism; CTP biosynthesis via de novo pathway; UDP from UMP (UMPK route): step 1/1. Allosterically activated by GTP. Inhibited by UTP. Its function is as follows. Catalyzes the reversible phosphorylation of UMP to UDP. The sequence is that of Uridylate kinase from Campylobacter jejuni subsp. doylei (strain ATCC BAA-1458 / RM4099 / 269.97).